The following is an 880-amino-acid chain: Alanine--tRNA ligase (880 aa).

The Zn(2+) site is built by His571, His575, Cys673, and His677.

Belongs to the class-II aminoacyl-tRNA synthetase family. Requires Zn(2+) as cofactor.

The protein localises to the cytoplasm. The catalysed reaction is tRNA(Ala) + L-alanine + ATP = L-alanyl-tRNA(Ala) + AMP + diphosphate. Functionally, catalyzes the attachment of alanine to tRNA(Ala) in a two-step reaction: alanine is first activated by ATP to form Ala-AMP and then transferred to the acceptor end of tRNA(Ala). Also edits incorrectly charged Ser-tRNA(Ala) and Gly-tRNA(Ala) via its editing domain. This is Alanine--tRNA ligase from Oleidesulfovibrio alaskensis (strain ATCC BAA-1058 / DSM 17464 / G20) (Desulfovibrio alaskensis).